The chain runs to 192 residues: Thymidylate kinase (192 aa).

Position 7-14 (7-14 (GIDCVGKS)) interacts with ATP.

It belongs to the thymidylate kinase family.

The catalysed reaction is dTMP + ATP = dTDP + ADP. In terms of biological role, phosphorylation of dTMP to form dTDP in both de novo and salvage pathways of dTTP synthesis. This is Thymidylate kinase from Campylobacter jejuni subsp. jejuni serotype O:6 (strain 81116 / NCTC 11828).